Reading from the N-terminus, the 269-residue chain is Chromophore lyase CRL, chloroplastic (269 aa).

A helical transmembrane segment spans residues 19–36; sequence ARGLVVKTLVLIGGALLI.

The protein belongs to the CpcT/CpeT biliprotein lyase family. As to expression, mostly expressed in shoot apices, to a lower extent, in leaves, inflorescence stems, buds and cotyledons, and, at low levels, in roots and siliques.

Its subcellular location is the plastid. It localises to the chloroplast outer membrane. Covalently attaches a chromophore to Cys residue(s) of phycobiliproteins. Required for plastid division, and involved in cell differentiation and regulation of the cell division plane. Maintenance of plastid homeostasis controls plant preconditioning to stress and stress acclimation. In terms of biological role, confers sensitivity to cabbage leaf curl virus (CaLCuV), probably by supporting viral movement. This chain is Chromophore lyase CRL, chloroplastic (CRL), found in Arabidopsis thaliana (Mouse-ear cress).